We begin with the raw amino-acid sequence, 396 residues long: Na(+)/H(+) antiporter NhaA (396 aa).

A run of 11 helical transmembrane segments spans residues 16–36, 59–79, 95–115, 124–144, 154–174, 178–198, 213–233, 254–274, 278–298, 328–348, and 363–383; these read GIIL…GLAG, LLLW…GLEV, TFPA…YAFF, AGWA…MALL, VFLL…IALF, QLSL…LWMN, LVLW…GVIV, ALHP…NAGV, GIGL…GLFI, IFAV…IASL, and LGIL…LRIA.

Belongs to the NhaA Na(+)/H(+) (TC 2.A.33) antiporter family.

Its subcellular location is the cell inner membrane. The catalysed reaction is Na(+)(in) + 2 H(+)(out) = Na(+)(out) + 2 H(+)(in). In terms of biological role, na(+)/H(+) antiporter that extrudes sodium in exchange for external protons. In Aeromonas hydrophila subsp. hydrophila (strain ATCC 7966 / DSM 30187 / BCRC 13018 / CCUG 14551 / JCM 1027 / KCTC 2358 / NCIMB 9240 / NCTC 8049), this protein is Na(+)/H(+) antiporter NhaA.